We begin with the raw amino-acid sequence, 506 residues long: Maturase K (506 aa).

Belongs to the intron maturase 2 family. MatK subfamily.

It localises to the plastid. Its subcellular location is the chloroplast. Functionally, usually encoded in the trnK tRNA gene intron. Probably assists in splicing its own and other chloroplast group II introns. In Lathyrus tingitanus (Tangier pea), this protein is Maturase K.